We begin with the raw amino-acid sequence, 211 residues long: tRNA (guanine-N(7)-)-methyltransferase (211 aa).

S-adenosyl-L-methionine-binding residues include Glu44, Asp69, Asp96, and Asp118. Asp118 is a catalytic residue. Lys122 lines the substrate pocket. The segment at 124–129 (RHEKRR) is interaction with RNA. Residues Asp154 and 191-194 (TEYE) each bind substrate.

This sequence belongs to the class I-like SAM-binding methyltransferase superfamily. TrmB family.

The enzyme catalyses guanosine(46) in tRNA + S-adenosyl-L-methionine = N(7)-methylguanosine(46) in tRNA + S-adenosyl-L-homocysteine. Its pathway is tRNA modification; N(7)-methylguanine-tRNA biosynthesis. Catalyzes the formation of N(7)-methylguanine at position 46 (m7G46) in tRNA. In Streptococcus equi subsp. zooepidemicus (strain H70), this protein is tRNA (guanine-N(7)-)-methyltransferase.